Consider the following 214-residue polypeptide: Dephospho-CoA kinase (214 aa).

Residues 4–204 (IVGLTGGIGS…QRYLQLAQQK (201 aa)) form the DPCK domain. 12-17 (GSGKST) contributes to the ATP binding site.

The protein belongs to the CoaE family.

It localises to the cytoplasm. The catalysed reaction is 3'-dephospho-CoA + ATP = ADP + CoA + H(+). It functions in the pathway cofactor biosynthesis; coenzyme A biosynthesis; CoA from (R)-pantothenate: step 5/5. Catalyzes the phosphorylation of the 3'-hydroxyl group of dephosphocoenzyme A to form coenzyme A. In Mannheimia succiniciproducens (strain KCTC 0769BP / MBEL55E), this protein is Dephospho-CoA kinase.